A 453-amino-acid polypeptide reads, in one-letter code: Ribulose bisphosphate carboxylase large chain (453 aa).

Positions 1 to 2 are excised as a propeptide; the sequence is MS. Proline 3 is modified (N-acetylproline). Lysine 14 bears the N6,N6,N6-trimethyllysine mark. Residues asparagine 123 and threonine 173 each contribute to the substrate site. The Proton acceptor role is filled by lysine 175. Lysine 177 lines the substrate pocket. 3 residues coordinate Mg(2+): lysine 201, aspartate 203, and glutamate 204. Lysine 201 bears the N6-carboxylysine mark. The active-site Proton acceptor is histidine 294. The substrate site is built by arginine 295, histidine 327, and serine 379.

The protein belongs to the RuBisCO large chain family. Type I subfamily. In terms of assembly, heterohexadecamer of 8 large chains and 8 small chains; disulfide-linked. The disulfide link is formed within the large subunit homodimers. Mg(2+) is required as a cofactor. In terms of processing, the disulfide bond which can form in the large chain dimeric partners within the hexadecamer appears to be associated with oxidative stress and protein turnover.

Its subcellular location is the plastid. The protein localises to the chloroplast. It catalyses the reaction 2 (2R)-3-phosphoglycerate + 2 H(+) = D-ribulose 1,5-bisphosphate + CO2 + H2O. The enzyme catalyses D-ribulose 1,5-bisphosphate + O2 = 2-phosphoglycolate + (2R)-3-phosphoglycerate + 2 H(+). Functionally, ruBisCO catalyzes two reactions: the carboxylation of D-ribulose 1,5-bisphosphate, the primary event in carbon dioxide fixation, as well as the oxidative fragmentation of the pentose substrate in the photorespiration process. Both reactions occur simultaneously and in competition at the same active site. In Valantia muralis (Wall valantia), this protein is Ribulose bisphosphate carboxylase large chain.